Here is a 760-residue protein sequence, read N- to C-terminus: MKFNYPETRRDDSVFDIFKSTEKGSVKVYDPYRHLEDQQSPETKKWVDEENKITRSFLDQDNTSEKISNEIMKMLNFERFDWFRRRGSKLFFSRNPNTLNQNIIYLIDIDQISISKDGKSSAKGFENAIEFLNPNTYSKDGTWSLKSFVISKSGDHVCFSYSKAGSDWEEIAVKKIITTNELKTNKDDEEEKEDLKKKNCLHYAVVDLPDSINWCKFTSIKWDENETGFIYNRYPKPEKVSDDDKGTETDTNLNNKVYYHKLGDANESFDRVVFECPENPQWIFGTEFSHDHSSLFISAFRDCNVEHNLYVIRNFQEAIANKSAFKVEALIDNFDACYYYITNTKQGEYFFLTNLSAPFNRLISIQLNDDQPIVPNSKSKLEFKEIIPEKDYVLESVSRSSQEKFYVSYQKHVQDIIEVYDFNGKYLKDIKLPGPGSASLSATEYHDHIFINFSNLVSPSVTYYMDSKNDELLLFKEPHIEGFKSSDYECKQVFYESPKDKTKIPMFIAYKKTTDITSGNAPTYMTGYGGFNISYTQSFSIRNIYFLNKFNGIFVIANIRGGGEYGKAWHEAGSKKNKQNCFDDFIGAAEYLIKENYTNQNKLAVRGGSNGGLLMGAISNQRPDLFKCVVADVGVMDMLRFHLHTIGSNWVSDYGRSDNPDDFDVLIKYSPLNNVPKDSNQYPSIMLCTGDHDDRVIPAHSYKFISELQYQLGKKVDTPLLIRVDKDSGHGAGKGLSKQNNEIADIFNFFSKVLNVKLNF.

Active-site charge relay system residues include Ser609, Asp693, and His730.

The protein belongs to the peptidase S9A family.

It is found in the cytoplasm. It carries out the reaction Hydrolysis of Pro-|-Xaa &gt;&gt; Ala-|-Xaa in oligopeptides.. Its activity is regulated as follows. Inhibited by chymostatin, Boc-Glu(NHO-Bz)-Pyrrolidide, Z-Pro-L-prolinal dimethyacetal and the peptide H-H-L-P-P-P-V-OH. Functionally, cleaves peptide bonds on the C-terminal side of prolyl residues within peptides that are up to approximately 30 amino acids long. In Dictyostelium discoideum (Social amoeba), this protein is Prolyl endopeptidase (prep).